The following is a 728-amino-acid chain: Catalase B (728 aa).

A signal peptide spans 1-15 (MRLTFIPSLIGVANA). Positions 16 to 27 (VCPYMTGELNRR) are excised as a propeptide. Residue His102 is part of the active site. Asn120 carries an N-linked (GlcNAc...) asparagine glycan. Residue Asn175 is part of the active site. Position 389 (Tyr389) interacts with heme. 2 N-linked (GlcNAc...) asparagine glycosylation sites follow: Asn448 and Asn551.

It belongs to the catalase family. In terms of assembly, homotetramer. It depends on heme as a cofactor. N-glycosylated.

The protein resides in the secreted. It carries out the reaction 2 H2O2 = O2 + 2 H2O. Occurs in almost all aerobically respiring organisms and serves to protect cells from the toxic effects of hydrogen peroxide. The polypeptide is Catalase B (catB) (Aspergillus fumigatus (strain ATCC MYA-4609 / CBS 101355 / FGSC A1100 / Af293) (Neosartorya fumigata)).